We begin with the raw amino-acid sequence, 73 residues long: MKLTCVVIVAVLLLTACQLITADDSRGTQKHRALGSTTELSLSTRCKSPGSSCSPTSYNCCRSCNPYTKRCYG.

The N-terminal stretch at Met1–Ala22 is a signal peptide. Positions Asp23–Arg45 are excised as a propeptide. Disulfide bonds link Cys46–Cys61, Cys53–Cys64, and Cys60–Cys71. A 4-hydroxyproline mark is found at Pro49, Pro55, and Pro66. Tyr72 is modified (tyrosine amide; in form omega-conotoxin GVIA).

The protein belongs to the conotoxin O1 superfamily. Expressed by the venom duct.

The protein localises to the secreted. Omega-conotoxins act at presynaptic membranes, they bind and block voltage-gated calcium channels (Cav). This toxin blocks N-type calcium channels (Cav2.2/CACNA1B) with a high potency (it displaces [125I]GVIA with an IC(50)=3.7-38 pM). In Conus geographus (Geography cone), this protein is Omega-conotoxin GVIA.